A 162-amino-acid chain; its full sequence is SsrA-binding protein (162 aa).

This sequence belongs to the SmpB family.

It is found in the cytoplasm. Functionally, required for rescue of stalled ribosomes mediated by trans-translation. Binds to transfer-messenger RNA (tmRNA), required for stable association of tmRNA with ribosomes. tmRNA and SmpB together mimic tRNA shape, replacing the anticodon stem-loop with SmpB. tmRNA is encoded by the ssrA gene; the 2 termini fold to resemble tRNA(Ala) and it encodes a 'tag peptide', a short internal open reading frame. During trans-translation Ala-aminoacylated tmRNA acts like a tRNA, entering the A-site of stalled ribosomes, displacing the stalled mRNA. The ribosome then switches to translate the ORF on the tmRNA; the nascent peptide is terminated with the 'tag peptide' encoded by the tmRNA and targeted for degradation. The ribosome is freed to recommence translation, which seems to be the essential function of trans-translation. In Sorangium cellulosum (strain So ce56) (Polyangium cellulosum (strain So ce56)), this protein is SsrA-binding protein.